The chain runs to 600 residues: Elongation factor 4 (600 aa).

The 183-residue stretch at 7–189 (SLIRNFSIIA…ALVQRLPAPT (183 aa)) folds into the tr-type G domain. GTP contacts are provided by residues 19-24 (DHGKST) and 136-139 (NKID).

Belongs to the TRAFAC class translation factor GTPase superfamily. Classic translation factor GTPase family. LepA subfamily.

Its subcellular location is the cell inner membrane. It carries out the reaction GTP + H2O = GDP + phosphate + H(+). Its function is as follows. Required for accurate and efficient protein synthesis under certain stress conditions. May act as a fidelity factor of the translation reaction, by catalyzing a one-codon backward translocation of tRNAs on improperly translocated ribosomes. Back-translocation proceeds from a post-translocation (POST) complex to a pre-translocation (PRE) complex, thus giving elongation factor G a second chance to translocate the tRNAs correctly. Binds to ribosomes in a GTP-dependent manner. This is Elongation factor 4 from Gluconobacter oxydans (strain 621H) (Gluconobacter suboxydans).